The sequence spans 61 residues: Large ribosomal subunit protein uL30 (61 aa).

It belongs to the universal ribosomal protein uL30 family. In terms of assembly, part of the 50S ribosomal subunit.

This chain is Large ribosomal subunit protein uL30, found in Oenococcus oeni (strain ATCC BAA-331 / PSU-1).